Consider the following 123-residue polypeptide: Small ribosomal subunit protein uS12 (123 aa).

The segment at 1 to 28 is disordered; it reads MPTIQQLIRKPREPKRVRSKSQHLESCP. Asp89 bears the 3-methylthioaspartic acid mark.

The protein belongs to the universal ribosomal protein uS12 family. In terms of assembly, part of the 30S ribosomal subunit. Contacts proteins S8 and S17. May interact with IF1 in the 30S initiation complex.

With S4 and S5 plays an important role in translational accuracy. In terms of biological role, interacts with and stabilizes bases of the 16S rRNA that are involved in tRNA selection in the A site and with the mRNA backbone. Located at the interface of the 30S and 50S subunits, it traverses the body of the 30S subunit contacting proteins on the other side and probably holding the rRNA structure together. The combined cluster of proteins S8, S12 and S17 appears to hold together the shoulder and platform of the 30S subunit. This is Small ribosomal subunit protein uS12 from Cereibacter sphaeroides (strain ATCC 17029 / ATH 2.4.9) (Rhodobacter sphaeroides).